The chain runs to 185 residues: Large ribosomal subunit protein bL25 (185 aa).

It belongs to the bacterial ribosomal protein bL25 family. CTC subfamily. As to quaternary structure, part of the 50S ribosomal subunit; part of the 5S rRNA/L5/L18/L25 subcomplex. Contacts the 5S rRNA. Binds to the 5S rRNA independently of L5 and L18.

Its function is as follows. This is one of the proteins that binds to the 5S RNA in the ribosome where it forms part of the central protuberance. The polypeptide is Large ribosomal subunit protein bL25 (Chlamydia trachomatis serovar L2 (strain ATCC VR-902B / DSM 19102 / 434/Bu)).